Reading from the N-terminus, the 416-residue chain is UDP-N-acetylglucosamine 1-carboxyvinyltransferase (416 aa).

22 to 23 (KN) provides a ligand contact to phosphoenolpyruvate. Residue Arg91 coordinates UDP-N-acetyl-alpha-D-glucosamine. The active-site Proton donor is the Cys115. Cys115 is modified (2-(S-cysteinyl)pyruvic acid O-phosphothioketal). Residues 120-124 (RPIDL), Asp305, and Ile327 contribute to the UDP-N-acetyl-alpha-D-glucosamine site.

It belongs to the EPSP synthase family. MurA subfamily.

It is found in the cytoplasm. The enzyme catalyses phosphoenolpyruvate + UDP-N-acetyl-alpha-D-glucosamine = UDP-N-acetyl-3-O-(1-carboxyvinyl)-alpha-D-glucosamine + phosphate. It participates in cell wall biogenesis; peptidoglycan biosynthesis. Its function is as follows. Cell wall formation. Adds enolpyruvyl to UDP-N-acetylglucosamine. The sequence is that of UDP-N-acetylglucosamine 1-carboxyvinyltransferase from Buchnera aphidicola subsp. Acyrthosiphon pisum (strain Tuc7).